A 454-amino-acid polypeptide reads, in one-letter code: Mitochondrial dynamics protein MID49 (454 aa).

Over 1 to 22 the chain is Mitochondrial intermembrane; that stretch reads MAEFSQKRGKRRGDEGLGSMVD. The chain crosses the membrane as a helical span at residues 23-43; that stretch reads FLLANARLVLGVGGAAVLGIA. At 44–454 the chain is on the cytoplasmic side; sequence TLAVKRFIDR…SGLQEPEGLL (411 aa). Positions 76 to 119 are disordered; that stretch reads ATPHLQPRPPPAALSQPVLPLAPSSSAPEGPAKSDPEVTPQLSS. The span at 88–108 shows a compositional bias: low complexity; the sequence is ALSQPVLPLAPSSSAPEGPAK.

Belongs to the MID49/MID51 family. Interacts with DNM1L.

The protein resides in the mitochondrion outer membrane. In terms of biological role, mitochondrial outer membrane protein which regulates mitochondrial organization. It is required for mitochondrial fission and promotes the recruitment and association of the fission mediator dynamin-related protein 1 (DNM1L) to the mitochondrial surface independently of the mitochondrial fission FIS1 and MFF proteins. Regulates DNM1L GTPase activity. This is Mitochondrial dynamics protein MID49 (MIEF2) from Pongo abelii (Sumatran orangutan).